Here is a 1119-residue protein sequence, read N- to C-terminus: Transcriptional repressor NF-X1 homolog (1119 aa).

A disordered region spans residues 1–214; sequence MADTEGTSSS…EPLTEEETKI (214 aa). Over residues 7-17 the composition is skewed to low complexity; that stretch reads TSSSIPTSTNS. Positions 18-29 are enriched in basic residues; that stretch reads SRHRASRGRGGR. The span at 84–98 shows a compositional bias: low complexity; it reads ANFTFNPNAATFNPA. Residues 113–128 are compositionally biased toward polar residues; that stretch reads GASTHSNQNSRQQEPS. Positions 143–154 are enriched in basic and acidic residues; the sequence is RQLEIQEQRGDS. Over residues 157-167 the composition is skewed to low complexity; sequence QNQSRQNNRNQ. The segment covering 174 to 193 has biased composition (polar residues); the sequence is ANQQNKSVQNPSRNPGNSRR. Residues 198-214 are compositionally biased toward basic and acidic residues; it reads RRREQKEEPLTEEETKI. Residues 235 to 287 form an RING-type; degenerate zinc finger; the sequence is CAICYTRITTRQGVWSCKTCYHIFHISTGCITDWARSSRDKEGANTWRCPTCQ. 9 consecutive NF-X1-type zinc fingers follow at residues 330-348, 383-402, 439-458, 500-523, 565-584, 592-611, 649-668, 703-726, and 735-756; these read CPHP…ECKL, CGQH…ECTV, CGIH…ECET, CGTP…PCNL, CGMH…FCLQ, CGIH…PCLQ, CDHS…PCTQ, CGVH…KCTK, and CEHP…PCKA. In terms of domain architecture, R3H spans 867 to 937; it reads IDFVKSVEKI…KRSIVLTAVR (71 aa). 2 disordered regions span residues 1024–1047 and 1078–1119; these read VDSD…PKDW and AAKK…ELLE. A compositionally biased stretch (polar residues) spans 1032 to 1041; that stretch reads NVPTTSNLVS. Residues 1086-1097 are compositionally biased toward acidic residues; that stretch reads PTWEDQCDEDAP.

This sequence belongs to the NFX1 family.

It localises to the nucleus. Functionally, may play a role in transcription regulation. This is Transcriptional repressor NF-X1 homolog (nfx-1) from Caenorhabditis elegans.